The primary structure comprises 1373 residues: Capping protein, Arp2/3 and myosin-I linker protein 3 (1373 aa).

The interval 126–151 (RGNADTPEGPRDTSPNSETSTSTTHS) is disordered. Low complexity predominate over residues 138-151 (TSPNSETSTSTTHS). LRR repeat units lie at residues 242–269 (SGSL…VFGE), 272–299 (SCVL…QLLC), 333–358 (ASSL…ALYS), 390–417 (CSHL…AFKQ), 422–446 (AYTL…LLQG), 453–475 (LSDL…ALQE), 480–507 (VTCI…LGKN), 510–536 (LKHL…LVQL), 541–564 (DCSL…LINA), and 568–591 (NTCL…MLSK). Disordered regions lie at residues 864 to 902 (RTLS…TNID) and 970 to 1373 (LRHQ…PGTD). A compositionally biased stretch (pro residues) spans 981–997 (PRTTPPGPGRPSVPVPG). Residues 1007–1022 (RLDEGLEDFFSRRVMD) show a composition bias toward basic and acidic residues. Basic residues predominate over residues 1047-1062 (QKRRRRGLFHFRRPRS). Pro residues predominate over residues 1078-1097 (LPPPPPPPPTQESPPSPDPP). Low complexity predominate over residues 1098-1108 (SLGNNSSPCWS). Basic and acidic residues predominate over residues 1218 to 1228 (RRAEATWHIAE). Polar residues predominate over residues 1232–1243 (PNHSCQSPSPAS). Residues 1269–1278 (PIGPRPPKPV) are compositionally biased toward pro residues. The span at 1345–1358 (QSCDKLEPDRRRPP) shows a compositional bias: basic and acidic residues.

This sequence belongs to the CARMIL family. As to expression, widely expressed, with much higher levels in fetal tissues than in adult ones. Highly expressed in newborn brain.

Its subcellular location is the cytoplasm. The protein resides in the cell membrane. In Rattus norvegicus (Rat), this protein is Capping protein, Arp2/3 and myosin-I linker protein 3 (Carmil3).